We begin with the raw amino-acid sequence, 369 residues long: Transcription factor GTE6 (369 aa).

The 110-residue stretch at 89–198 (KRMQDLMRQF…EKFEEKWAHF (110 aa)) folds into the Bromo domain. A coiled-coil region spans residues 201-263 (KVQEEEKIRE…VERCRKITIE (63 aa)). The NET domain occupies 250–331 (MRKVVERCRK…DALDNAMKKK (82 aa)). A compositionally biased stretch (basic and acidic residues) spans 329-348 (KKKKEEETKTRELSGAQKKE). The segment at 329-369 (KKKKEEETKTRELSGAQKKEVSKKRNATTKLAERKTKRSRI) is disordered. Positions 351 to 368 (KKRNATTKLAERKTKRSR) match the Bipartite nuclear localization signal motif.

Abundantly expressed in flowers. Weakly expressed in roots, leaves and siliques; and undetectable in 5-day-old seedlings. In the basal rosette leaves of 21-day-old plants, it is more abundant in leaves 6 and 7, which possess narrow elliptical laminae, than in leaves 1-4, which have round laminae, suggesting a possible correlation between its expression and the formation of elliptical leaf laminae in mature leaves.

It localises to the nucleus. Functionally, regulates differences in leaf patterning between juvenile and mature leaves by controlling differences in the development of primordia produced during juvenile and mature phases. Acts by activating transcription of the myb-domain protein AS1, a gene involved in leaf-axis specification. Associates with the promoter and the start of the transcribed region of AS1 and up-regulates expression of AS1 through acetylation of histones H3 and H4. The sequence is that of Transcription factor GTE6 (GTE6) from Arabidopsis thaliana (Mouse-ear cress).